Consider the following 177-residue polypeptide: 2-C-methyl-D-erythritol 2,4-cyclodiphosphate synthase (177 aa).

The a divalent metal cation site is built by aspartate 8 and histidine 10. 4-CDP-2-C-methyl-D-erythritol 2-phosphate is bound by residues 8 to 10 (DVH) and 34 to 35 (HS). Histidine 42 is an a divalent metal cation binding site. 4-CDP-2-C-methyl-D-erythritol 2-phosphate-binding positions include 56-58 (DIG), 61-65 (FPDTD), 132-135 (TTEE), phenylalanine 139, and arginine 142.

Belongs to the IspF family. Homotrimer. Requires a divalent metal cation as cofactor.

It catalyses the reaction 4-CDP-2-C-methyl-D-erythritol 2-phosphate = 2-C-methyl-D-erythritol 2,4-cyclic diphosphate + CMP. The protein operates within isoprenoid biosynthesis; isopentenyl diphosphate biosynthesis via DXP pathway; isopentenyl diphosphate from 1-deoxy-D-xylulose 5-phosphate: step 4/6. Its function is as follows. Involved in the biosynthesis of isopentenyl diphosphate (IPP) and dimethylallyl diphosphate (DMAPP), two major building blocks of isoprenoid compounds. Catalyzes the conversion of 4-diphosphocytidyl-2-C-methyl-D-erythritol 2-phosphate (CDP-ME2P) to 2-C-methyl-D-erythritol 2,4-cyclodiphosphate (ME-CPP) with a corresponding release of cytidine 5-monophosphate (CMP). The protein is 2-C-methyl-D-erythritol 2,4-cyclodiphosphate synthase of Agathobacter rectalis (strain ATCC 33656 / DSM 3377 / JCM 17463 / KCTC 5835 / VPI 0990) (Eubacterium rectale).